The primary structure comprises 363 residues: UV excision repair protein RAD23 homolog A (363 aa).

Residues 1-81 (MAVTITLKTL…VVVMVTKTKA (81 aa)) enclose the Ubiquitin-like domain. The segment at 81–160 (AGQGTSAPPE…EDAASTLVTG (80 aa)) is disordered. The segment covering 85–103 (TSAPPEASPTAAPESSTSF) has biased composition (low complexity). Lys122 is covalently cross-linked (Glycyl lysine isopeptide (Lys-Gly) (interchain with G-Cter in ubiquitin)). Phosphoserine is present on residues Ser123, Ser128, Ser133, Ser136, and Ser138. Over residues 126 to 147 (EESAPTTSPESVSGSVPSSGSS) the composition is skewed to low complexity. The UBA 1 domain occupies 161 to 201 (SEYETMLTEIMSMGYERERVVAALRASYNNPHRAVEYLLTG). The interval 203–227 (PGSPEPEHGSVQESQVSEQPATEAA) is disordered. Ser205 carries the phosphoserine modification. Polar residues predominate over residues 213–222 (VQESQVSEQP). Phosphoserine is present on residues Ser295 and Ser357. A UBA 2 domain is found at 318–358 (PQEKEAIERLKALGFPESLVIQAYFACEKNENLAANFLLSQ). The segment at 319-363 (QEKEAIERLKALGFPESLVIQAYFACEKNENLAANFLLSQNFDDE) is HIV-1 vpr binding.

The protein belongs to the RAD23 family. Interacts with XPC; the interaction is suggesting the existence of a functional equivalent variant XPC complex. Interacts with PSMD4 and PSMC5. Interacts with ATXN3. Interacts with UBQLN2. In terms of assembly, (Microbial infection) Interacts with HIV-1 Vpr.

It is found in the nucleus. Functionally, multiubiquitin chain receptor involved in modulation of proteasomal degradation. Binds to 'Lys-48'-linked polyubiquitin chains in a length-dependent manner and with a lower affinity to 'Lys-63'-linked polyubiquitin chains. Proposed to be capable to bind simultaneously to the 26S proteasome and to polyubiquitinated substrates and to deliver ubiquitinated proteins to the proteasome. Involved in nucleotide excision repair and is thought to be functional equivalent for RAD23B in global genome nucleotide excision repair (GG-NER) by association with XPC. In vitro, the XPC:RAD23A dimer has NER activity. Can stabilize XPC. Its function is as follows. (Microbial infection) Involved in Vpr-dependent replication of HIV-1 in non-proliferating cells and primary macrophages. Required for the association of HIV-1 Vpr with the host proteasome. The protein is UV excision repair protein RAD23 homolog A (RAD23A) of Homo sapiens (Human).